Consider the following 488-residue polypeptide: DNA polymerase processivity factor (488 aa).

Disordered regions lie at residues 1–26, 331–453, and 469–488; these read MTDS…GQPE, SPSA…RSGS, and PGAF…FGFP. Residues 331-344 are compositionally biased toward low complexity; sequence SPSAGSSASRASGS. Positions 345–355 are enriched in polar residues; sequence EPTDSQDSASD. The span at 368–379 shows a compositional bias: low complexity; it reads AARAGEAGALHA. The span at 383–393 shows a compositional bias: polar residues; it reads PSSTTRVTPTT. The Bipartite nuclear localization signal motif lies at 394-413; it reads KRGRSGGEDARADTALKKPK. Over residues 398–409 the composition is skewed to basic and acidic residues; sequence SGGEDARADTAL. Residues 437-453 show a composition bias toward low complexity; the sequence is ADGTAARPAAPDARSGS.

Belongs to the herpesviridae DNA polymerase processivity factor family. Interacts with the DNA polymerase catalytic subunit UL30. Interacts with the origin-binding protein.

The protein resides in the host nucleus. Plays an essential role in viral DNA replication by acting as the polymerase accessory subunit. Associates with the viral polymerase to increase its processivity and forms high-affinity direct interactions with DNA. Facilitates the origin-binding protein UL9 loading onto DNA thus increasing its ability to assemble into a functional complex capable of unwinding duplex DNA. This is DNA polymerase processivity factor from Homo sapiens (Human).